We begin with the raw amino-acid sequence, 273 residues long: Dermonecrotic toxin LdSicTox-alphaIB1aii (273 aa).

H5 is an active-site residue. 2 residues coordinate Mg(2+): E25 and D27. H41 acts as the Nucleophile in catalysis. 2 disulfides stabilise this stretch: C45-C51 and C47-C190. D85 is a Mg(2+) binding site. N250 is a glycosylation site (N-linked (GlcNAc...) asparagine).

It belongs to the arthropod phospholipase D family. Class II subfamily. The cofactor is Mg(2+). In terms of tissue distribution, expressed by the venom gland.

The protein localises to the secreted. The enzyme catalyses an N-(acyl)-sphingosylphosphocholine = an N-(acyl)-sphingosyl-1,3-cyclic phosphate + choline. It carries out the reaction an N-(acyl)-sphingosylphosphoethanolamine = an N-(acyl)-sphingosyl-1,3-cyclic phosphate + ethanolamine. It catalyses the reaction a 1-acyl-sn-glycero-3-phosphocholine = a 1-acyl-sn-glycero-2,3-cyclic phosphate + choline. The catalysed reaction is a 1-acyl-sn-glycero-3-phosphoethanolamine = a 1-acyl-sn-glycero-2,3-cyclic phosphate + ethanolamine. Functionally, dermonecrotic toxins cleave the phosphodiester linkage between the phosphate and headgroup of certain phospholipids (sphingolipid and lysolipid substrates), forming an alcohol (often choline) and a cyclic phosphate. This toxin acts on sphingomyelin (SM). It may also act on ceramide phosphoethanolamine (CPE), lysophosphatidylcholine (LPC) and lysophosphatidylethanolamine (LPE), but not on lysophosphatidylserine (LPS), and lysophosphatidylglycerol (LPG). It acts by transphosphatidylation, releasing exclusively cyclic phosphate products as second products. Induces dermonecrosis, hemolysis, increased vascular permeability, edema, inflammatory response, and platelet aggregation. In Loxosceles deserta (Desert recluse spider), this protein is Dermonecrotic toxin LdSicTox-alphaIB1aii.